The sequence spans 426 residues: D-tagatose-1,6-bisphosphate aldolase subunit KbaZ (426 aa).

This sequence belongs to the GatZ/KbaZ family. KbaZ subfamily. As to quaternary structure, forms a complex with KbaY.

It functions in the pathway carbohydrate metabolism; D-tagatose 6-phosphate degradation; D-glyceraldehyde 3-phosphate and glycerone phosphate from D-tagatose 6-phosphate: step 2/2. Functionally, component of the tagatose-1,6-bisphosphate aldolase KbaYZ that is required for full activity and stability of the Y subunit. Could have a chaperone-like function for the proper and stable folding of KbaY. When expressed alone, KbaZ does not show any aldolase activity. The chain is D-tagatose-1,6-bisphosphate aldolase subunit KbaZ from Escherichia fergusonii (strain ATCC 35469 / DSM 13698 / CCUG 18766 / IAM 14443 / JCM 21226 / LMG 7866 / NBRC 102419 / NCTC 12128 / CDC 0568-73).